A 125-amino-acid chain; its full sequence is Small ribosomal subunit protein uS12m (125 aa).

The protein belongs to the universal ribosomal protein uS12 family.

The protein localises to the mitochondrion. In terms of biological role, protein S12 is involved in the translation initiation step. The polypeptide is Small ribosomal subunit protein uS12m (RPS12) (Helianthus annuus (Common sunflower)).